Consider the following 448-residue polypeptide: Methylenetetrahydrofolate--tRNA-(uracil-5-)-methyltransferase TrmFO (448 aa).

Residue 10–15 coordinates FAD; sequence GAGLAG.

This sequence belongs to the MnmG family. TrmFO subfamily. It depends on FAD as a cofactor.

The protein resides in the cytoplasm. The enzyme catalyses uridine(54) in tRNA + (6R)-5,10-methylene-5,6,7,8-tetrahydrofolate + NADH + H(+) = 5-methyluridine(54) in tRNA + (6S)-5,6,7,8-tetrahydrofolate + NAD(+). The catalysed reaction is uridine(54) in tRNA + (6R)-5,10-methylene-5,6,7,8-tetrahydrofolate + NADPH + H(+) = 5-methyluridine(54) in tRNA + (6S)-5,6,7,8-tetrahydrofolate + NADP(+). In terms of biological role, catalyzes the folate-dependent formation of 5-methyl-uridine at position 54 (M-5-U54) in all tRNAs. In Lactococcus lactis subsp. cremoris (strain SK11), this protein is Methylenetetrahydrofolate--tRNA-(uracil-5-)-methyltransferase TrmFO.